Consider the following 349-residue polypeptide: Heat-inducible transcription repressor HrcA (349 aa).

The protein belongs to the HrcA family.

Its function is as follows. Negative regulator of class I heat shock genes (grpE-dnaK-dnaJ and groELS operons). Prevents heat-shock induction of these operons. The polypeptide is Heat-inducible transcription repressor HrcA (Mycoplasmoides gallisepticum (strain R(low / passage 15 / clone 2)) (Mycoplasma gallisepticum)).